The primary structure comprises 90 residues: UPF0335 protein bsl7135 (90 aa).

It belongs to the UPF0335 family.

The polypeptide is UPF0335 protein bsl7135 (Bradyrhizobium diazoefficiens (strain JCM 10833 / BCRC 13528 / IAM 13628 / NBRC 14792 / USDA 110)).